The sequence spans 364 residues: Anhydro-N-acetylmuramic acid kinase (364 aa).

An ATP-binding site is contributed by 12–19 (GTSHDAID).

Belongs to the anhydro-N-acetylmuramic acid kinase family.

The catalysed reaction is 1,6-anhydro-N-acetyl-beta-muramate + ATP + H2O = N-acetyl-D-muramate 6-phosphate + ADP + H(+). Its pathway is amino-sugar metabolism; 1,6-anhydro-N-acetylmuramate degradation. It participates in cell wall biogenesis; peptidoglycan recycling. Catalyzes the specific phosphorylation of 1,6-anhydro-N-acetylmuramic acid (anhMurNAc) with the simultaneous cleavage of the 1,6-anhydro ring, generating MurNAc-6-P. Is required for the utilization of anhMurNAc either imported from the medium or derived from its own cell wall murein, and thus plays a role in cell wall recycling. The sequence is that of Anhydro-N-acetylmuramic acid kinase from Gamma-proteobacterium EBAC31A08.